Here is a 648-residue protein sequence, read N- to C-terminus: ATP-dependent DNA helicase Q1 (648 aa).

A Helicase ATP-binding domain is found at 100-275; that stretch reads INVTMARKDI…QKILCVGKCL (176 aa). An ATP-binding site is contributed by 113-120; sequence MPTGGGKS. A DEVH box motif is present at residues 219–222; sequence DEVH. One can recognise a Helicase C-terminal domain in the interval 299–451; that stretch reads DFTEDIVKLI…EMVSYCQNVS (153 aa). Residues Cys-453, Cys-471, Cys-475, and Cys-478 each contribute to the Zn(2+) site. Lys-514 and Lys-522 each carry N6-acetyllysine. The residue at position 597 (Ser-597) is a Phosphoserine. Positions 601–648 are disordered; it reads ALSEARQVEQVDSKGEEQSSGNSQKSKSRLQPSGSKNAGAKKRKLDDA. Positions 606-617 are enriched in basic and acidic residues; the sequence is RQVEQVDSKGEE. The span at 618-636 shows a compositional bias: polar residues; that stretch reads QSSGNSQKSKSRLQPSGSK. The residue at position 633 (Ser-633) is a Phosphoserine. Residues 639 to 648 show a composition bias toward basic residues; that stretch reads GAKKRKLDDA.

Belongs to the helicase family. RecQ subfamily. As to quaternary structure, may form homodimers or higher order oligomers. Interacts with EXO1. Interacts with MLH1. Interacts with PARP1. Requires Mg(2+) as cofactor. It depends on Mn(2+) as a cofactor. Zn(2+) serves as cofactor. In terms of tissue distribution, expressed in all tissues examined. Only expressed in spermatocytes. Expression increases at pachytene (17 days old) and decreases after completion of meiosis II (7 weeks old).

The protein resides in the nucleus. The enzyme catalyses Couples ATP hydrolysis with the unwinding of duplex DNA by translocating in the 3'-5' direction.. It catalyses the reaction ATP + H2O = ADP + phosphate + H(+). The catalysed reaction is dATP + H2O = dADP + phosphate + H(+). Its function is as follows. DNA helicase that plays a role in DNA damage repair and genome stability. Exhibits a magnesium- and ATP-dependent DNA-helicase activity that unwinds single- and double-stranded DNA in a 3'-5' direction. Plays a role in restoring regressed replication forks. Required to restart stalled replication forks induced by abortive topoisomerase 1 and 2 lesions. May play a role in the repair of DNA that is damaged by ultraviolet light or other mutagens. The chain is ATP-dependent DNA helicase Q1 (Recql) from Mus musculus (Mouse).